The following is a 485-amino-acid chain: Alginate biosynthesis protein AlgA (485 aa).

The protein belongs to the mannose-6-phosphate isomerase type 2 family. In terms of assembly, monomer. It depends on Co(2+) as a cofactor.

It catalyses the reaction D-mannose 6-phosphate = D-fructose 6-phosphate. The catalysed reaction is alpha-D-mannose 1-phosphate + GTP + H(+) = GDP-alpha-D-mannose + diphosphate. It functions in the pathway nucleotide-sugar biosynthesis; GDP-alpha-D-mannose biosynthesis; GDP-alpha-D-mannose from alpha-D-mannose 1-phosphate (GTP route): step 1/1. Its pathway is nucleotide-sugar biosynthesis; GDP-alpha-D-mannose biosynthesis; alpha-D-mannose 1-phosphate from D-fructose 6-phosphate: step 1/2. Functionally, produces a precursor for alginate polymerization. The alginate layer provides a protective barrier against host immune defenses and antibiotics. The polypeptide is Alginate biosynthesis protein AlgA (algA) (Pseudomonas putida (strain ATCC 47054 / DSM 6125 / CFBP 8728 / NCIMB 11950 / KT2440)).